The following is a 661-amino-acid chain: Transmembrane and coiled-coil domain-containing protein STS1 (661 aa).

2 disordered regions span residues 34 to 71 (AHHH…GADA) and 154 to 185 (VGNT…DDQL). The segment covering 59-69 (SSSSSNSGAGA) has biased composition (low complexity). Residues 175-184 (SPGESSHDDQ) are compositionally biased toward basic and acidic residues. 4 helical membrane-spanning segments follow: residues 306 to 326 (ALLA…FGAL), 333 to 353 (LVPV…GSVA), 355 to 375 (SVAV…SKMA), and 466 to 486 (LSGL…TDFI).

Belongs to the TMCO4 family. Interacts with PKS10/PKS2 and 4CLL9/ACOS12.

It localises to the endoplasmic reticulum membrane. Functionally, involved in anther lipids biosynthesis and is required for tapetum degradation and pollen wall formation. Required for the formation of Ubisch bodies and microspores. Possesses lipase activity in vitro toward two synthetic substrates, p-nitrophenyl acetate (pNPA) and p-nitrophenyl butyrate (pNPB). This Oryza sativa subsp. japonica (Rice) protein is Transmembrane and coiled-coil domain-containing protein STS1.